The chain runs to 210 residues: RNA chaperone ProQ (210 aa).

A compositionally biased stretch (basic and acidic residues) spans His-98–Ala-127. Positions His-98–Glu-155 are disordered.

It belongs to the ProQ family.

The protein localises to the cytoplasm. Its function is as follows. RNA chaperone with significant RNA binding, RNA strand exchange and RNA duplexing activities. The sequence is that of RNA chaperone ProQ from Aliivibrio salmonicida (strain LFI1238) (Vibrio salmonicida (strain LFI1238)).